The primary structure comprises 202 residues: ATP-dependent Clp protease proteolytic subunit (202 aa).

The active-site Nucleophile is Ser101. His126 is a catalytic residue.

The protein belongs to the peptidase S14 family. As to quaternary structure, component of the chloroplastic Clp protease core complex.

It localises to the plastid. It is found in the chloroplast stroma. The catalysed reaction is Hydrolysis of proteins to small peptides in the presence of ATP and magnesium. alpha-casein is the usual test substrate. In the absence of ATP, only oligopeptides shorter than five residues are hydrolyzed (such as succinyl-Leu-Tyr-|-NHMec, and Leu-Tyr-Leu-|-Tyr-Trp, in which cleavage of the -Tyr-|-Leu- and -Tyr-|-Trp bonds also occurs).. Its function is as follows. Cleaves peptides in various proteins in a process that requires ATP hydrolysis. Has a chymotrypsin-like activity. Plays a major role in the degradation of misfolded proteins. This Drimys granadensis protein is ATP-dependent Clp protease proteolytic subunit.